The primary structure comprises 200 residues: Recombination protein RecR (200 aa).

Residues 57-72 (CRQCRTLTEEELCPQC) form a C4-type zinc finger. The region spanning 80–175 (TLLCVVEGPM…ITSRIAHGVP (96 aa)) is the Toprim domain.

This sequence belongs to the RecR family.

May play a role in DNA repair. It seems to be involved in an RecBC-independent recombinational process of DNA repair. It may act with RecF and RecO. This is Recombination protein RecR from Pseudomonas fluorescens (strain SBW25).